Here is a 208-residue protein sequence, read N- to C-terminus: Putative 3-methyladenine DNA glycosylase (208 aa).

This sequence belongs to the DNA glycosylase MPG family.

The protein is Putative 3-methyladenine DNA glycosylase of Lactobacillus delbrueckii subsp. bulgaricus (strain ATCC BAA-365 / Lb-18).